A 452-amino-acid chain; its full sequence is MELVKLNRSVQGSGPVASLCRPGGPLLNNSGTGNLSCEPPRIRGAGTRELELAIRVTLYAVIFLMSVGGNILIIVVLGLSRRLRTVTNAFLLSLAVSDLLLAVACMPFTLLPNLMGTFIFGTVICKAVSYLMGVSVSVSTLSLVAIALERYSAICRPLQARVWQTRSHAARVILATWLLSGLLMVPYPVYTAVQPVGPRVLQCVHRWPSARVRQTWSVLLLLLLFFVPGVVMAVAYGLISRELYLGLRFDSDSDSESQSRVRGQGGLPGGAAPGPVHQNGRCRPEAGLAGEDGDGCYVQLPRSRPALELSALTAPISGPGPGPRPAQAKLLAKKRVVRMLLVIVVLFFMCWLPVYSANTWRAFDGPGAHRALSGAPISFIHLLSYASACVNPLVYCFMHRRFRQACLDTCARCCPRPPRARPRPLPDEDPPTPSIASLSRLSYTTISTLGPG.

The Extracellular segment spans residues 1 to 55 (MELVKLNRSVQGSGPVASLCRPGGPLLNNSGTGNLSCEPPRIRGAGTRELELAIR). N-linked (GlcNAc...) asparagine glycans are attached at residues N7, N28, and N34. Residues 56–77 (VTLYAVIFLMSVGGNILIIVVL) traverse the membrane as a helical segment. Over 78-85 (GLSRRLRT) the chain is Cytoplasmic. A helical membrane pass occupies residues 86 to 107 (VTNAFLLSLAVSDLLLAVACMP). At 108 to 129 (FTLLPNLMGTFIFGTVICKAVS) the chain is on the extracellular side. C125 and C203 form a disulfide bridge. Residues 130–148 (YLMGVSVSVSTLSLVAIAL) traverse the membrane as a helical segment. Residues 149–168 (ERYSAICRPLQARVWQTRSH) lie on the Cytoplasmic side of the membrane. Residues 169–187 (AARVILATWLLSGLLMVPY) traverse the membrane as a helical segment. Residues 188 to 217 (PVYTAVQPVGPRVLQCVHRWPSARVRQTWS) are Extracellular-facing. The chain crosses the membrane as a helical span at residues 218-240 (VLLLLLLFFVPGVVMAVAYGLIS). Residues 241–338 (RELYLGLRFD…KLLAKKRVVR (98 aa)) are Cytoplasmic-facing. Positions 255–285 (SESQSRVRGQGGLPGGAAPGPVHQNGRCRPE) are disordered. Residues 263 to 272 (GQGGLPGGAA) are compositionally biased toward gly residues. A helical transmembrane segment spans residues 339–360 (MLLVIVVLFFMCWLPVYSANTW). At 361-378 (RAFDGPGAHRALSGAPIS) the chain is on the extracellular side. Residues 379–399 (FIHLLSYASACVNPLVYCFMH) form a helical membrane-spanning segment. Topologically, residues 400–452 (RRFRQACLDTCARCCPRPPRARPRPLPDEDPPTPSIASLSRLSYTTISTLGPG) are cytoplasmic. A lipid anchor (S-palmitoyl cysteine) is attached at C413.

This sequence belongs to the G-protein coupled receptor 1 family.

The protein resides in the cell membrane. Its function is as follows. Receptor for gastrin and cholecystokinin. The CCK-B receptors occur throughout the central nervous system where they modulate anxiety, analgesia, arousal, and neuroleptic activity. This receptor mediates its action by association with G proteins that activate a phosphatidylinositol-calcium second messenger system. The chain is Gastrin/cholecystokinin type B receptor (CCKBR) from Oryctolagus cuniculus (Rabbit).